We begin with the raw amino-acid sequence, 410 residues long: Diguanylate cyclase DgcM (410 aa).

PAS domains follow at residues 3-70 (THNF…NQHD) and 129-198 (GFYA…HLPG). A PAC domain is found at 199 to 251 (GHKPLNFVHKLADGSTRHVQTYAGPIEIYGDKLMLCIVHDITEQKRLEEQLEH). The GGDEF domain maps to 283-410 (QDYSLLLIDT…NDGRNRVLAA (128 aa)). Residue Asp291 coordinates Mg(2+). Residues Asn299, His304, and Asp308 each coordinate substrate. A Mg(2+)-binding site is contributed by Glu334. The Proton acceptor role is filled by Glu334.

Forms homodimers and homotetramers. Interacts with PdeR and MlrA. Requires Mg(2+) as cofactor.

It carries out the reaction 2 GTP = 3',3'-c-di-GMP + 2 diphosphate. Its pathway is purine metabolism; 3',5'-cyclic di-GMP biosynthesis. Activity is inhibited by the phosphodiesterase PdeR. Inhibition is relieved by high cellular c-di-GMP levels. Functionally, part of a signaling cascade that regulates curli biosynthesis. The cascade is composed of two cyclic-di-GMP (c-di-GMP) control modules, in which c-di-GMP controlled by the DgcE/PdeH pair (module I) regulates the activity of the DgcM/PdeR pair (module II), which in turn regulates activity of the transcription factor MlrA and expression of the master biofilm regulator csgD. DgcM stimulates activity of MlrA by direct interaction, leading to the transcription of csgD. It also catalyzes the synthesis of c-di-GMP via the condensation of 2 GTP molecules, which contributes to the c-di-GMP pool generated by module I in a positive feedback loop. Production of c-di-GMP contributes to but is not essential for MlrA activation. This chain is Diguanylate cyclase DgcM, found in Escherichia coli (strain K12).